Reading from the N-terminus, the 144-residue chain is Methylglyoxal synthase (144 aa).

In terms of domain architecture, MGS-like spans 1-144 (MNIALIAHDE…EEEQRKFLTD (144 aa)). Residues His8, Lys12, 34-37 (TGTT), and 54-55 (SG) each bind substrate. Catalysis depends on Asp60, which acts as the Proton donor/acceptor. His87 serves as a coordination point for substrate.

This sequence belongs to the methylglyoxal synthase family.

It catalyses the reaction dihydroxyacetone phosphate = methylglyoxal + phosphate. Its function is as follows. Catalyzes the formation of methylglyoxal from dihydroxyacetone phosphate. The sequence is that of Methylglyoxal synthase from Exiguobacterium sibiricum (strain DSM 17290 / CCUG 55495 / CIP 109462 / JCM 13490 / 255-15).